A 363-amino-acid chain; its full sequence is tRNA N6-adenosine threonylcarbamoyltransferase (363 aa).

Fe cation contacts are provided by His117 and His121. Substrate contacts are provided by residues 139 to 143 (LVSGG), Asp172, Gly185, and Asn287. Asp315 is a Fe cation binding site.

The protein belongs to the KAE1 / TsaD family. Fe(2+) serves as cofactor.

It localises to the cytoplasm. It carries out the reaction L-threonylcarbamoyladenylate + adenosine(37) in tRNA = N(6)-L-threonylcarbamoyladenosine(37) in tRNA + AMP + H(+). Functionally, required for the formation of a threonylcarbamoyl group on adenosine at position 37 (t(6)A37) in tRNAs that read codons beginning with adenine. Is involved in the transfer of the threonylcarbamoyl moiety of threonylcarbamoyl-AMP (TC-AMP) to the N6 group of A37, together with TsaE and TsaB. TsaD likely plays a direct catalytic role in this reaction. The polypeptide is tRNA N6-adenosine threonylcarbamoyltransferase (Cereibacter sphaeroides (strain ATCC 17025 / ATH 2.4.3) (Rhodobacter sphaeroides)).